A 952-amino-acid chain; its full sequence is Protein translocase subunit SecA (952 aa).

Residues Gln135, 153–157 (GEGKT), and Asp575 contribute to the ATP site. The span at 916 to 930 (VSAKAATQPAAPAAK) shows a compositional bias: low complexity. The disordered stretch occupies residues 916 to 952 (VSAKAATQPAAPAAKEVGRNDPCPCGSGKKYKKCCGK). 4 residues coordinate Zn(2+): Cys938, Cys940, Cys949, and Cys950.

This sequence belongs to the SecA family. As to quaternary structure, monomer and homodimer. Part of the essential Sec protein translocation apparatus which comprises SecA, SecYEG and auxiliary proteins SecDF. Other proteins may also be involved. It depends on Zn(2+) as a cofactor.

The protein localises to the cell membrane. Its subcellular location is the cytoplasm. The catalysed reaction is ATP + H2O + cellular proteinSide 1 = ADP + phosphate + cellular proteinSide 2.. Its function is as follows. Part of the Sec protein translocase complex. Interacts with the SecYEG preprotein conducting channel. Has a central role in coupling the hydrolysis of ATP to the transfer of proteins into and across the cell membrane, serving as an ATP-driven molecular motor driving the stepwise translocation of polypeptide chains across the membrane. The polypeptide is Protein translocase subunit SecA (Dehalococcoides mccartyi (strain ATCC BAA-2266 / KCTC 15142 / 195) (Dehalococcoides ethenogenes (strain 195))).